Reading from the N-terminus, the 445-residue chain is GTPase Der (445 aa).

2 consecutive EngA-type G domains span residues 2 to 166 and 182 to 355; these read FRVA…PEYE and IKVA…NQAW. Residues 8-15, 55-59, 118-121, 188-195, 235-239, and 300-303 contribute to the GTP site; these read GIPNVGKS, DTGGY, NKID, GKPNAGKS, and DTAGM. The 85-residue stretch at 356–440 folds into the KH-like domain; that stretch reads KRVGTGQLNR…PIKLIFRGKE (85 aa).

The protein belongs to the TRAFAC class TrmE-Era-EngA-EngB-Septin-like GTPase superfamily. EngA (Der) GTPase family. As to quaternary structure, associates with the 50S ribosomal subunit.

Its function is as follows. GTPase that plays an essential role in the late steps of ribosome biogenesis. The sequence is that of GTPase Der from Sulfurihydrogenibium sp. (strain YO3AOP1).